The primary structure comprises 389 residues: Glutamate 5-kinase (389 aa).

Residue Lys-16 participates in ATP binding. Ser-56, Asp-143, and Asn-155 together coordinate substrate. 175–176 (SD) contacts ATP. One can recognise a PUA domain in the interval 281–358 (AGELHVDEGA…AEIEAILGYA (78 aa)).

The protein belongs to the glutamate 5-kinase family.

It is found in the cytoplasm. It carries out the reaction L-glutamate + ATP = L-glutamyl 5-phosphate + ADP. Its pathway is amino-acid biosynthesis; L-proline biosynthesis; L-glutamate 5-semialdehyde from L-glutamate: step 1/2. Catalyzes the transfer of a phosphate group to glutamate to form L-glutamate 5-phosphate. This chain is Glutamate 5-kinase, found in Rhizobium etli (strain ATCC 51251 / DSM 11541 / JCM 21823 / NBRC 15573 / CFN 42).